Consider the following 1107-residue polypeptide: MEAAVGAPDGVDQGGVGPLEDETPMDAYLRKLGLYRKLVAKDGSCLFRAVAEQVLHSQSRHVEVRMACIRYLRENREKFEAFIEGSFEEYLKRLENPQEWVGQVEISALSLMYRKDFVIYQEPNVSPSHVTENNFPEKVLLCFSNGNHYDIVYPITYKDSSAMCQSLLYELLYEKVFKTDVSKIMMGLEASEVAEESNSEISDSEDDSCKSKSTAATDVNGFKPSGSENPKNNGNSADLPLSRKVLKSLNPAVYRNVEYEIWLKSKQAQQKRDYSIAAGLQYEVGDKCHQVRLDHNGKLSNADIHGVHSENGLVLSEELGKKHTPKNLKPPPPESWNTVSGKKMKKPNSGQNFHSDTDYRGPKNLNKPIKAPSALPPRLQHPSSGVRQHAFSSHSTGSQSQKSSSEHKNLSRMPSQITRKPDRERAEDFDHVSRESYYFGLSPEERREKQAIEESRLLYEIQNRDEQAFPALSSSSVSQSPSQNSNACVPRKSSHARDRKGSMRRADAEERKDKDSLRGHTHVDKKPEPSTLEISDDKCTRVSSPSKSKKECPSPVEQKPAEHIPLSNPAPLLVSPEVHLTPAVPSLPATVPAWPSEPTTFGPTGVPAQIPILSVTQTTGPDAAVSQAHLTPSPVPVSIQAVNQPLMPLPQTMSLYQDPLYPGFPCSEKGDRAIAPPYSLCQTGEDLPKDKNILRFFFNLGVKAYSCPMWAPHSYLYPLHQAYMAACRMYPKVPVPVYPQNTWFQEAPPAQSESDCPCTDAHYSLHPEASVNGQMPQAEMGPPAFASPLVIPPSQVSEGHGQLSYQPELESENPGQLLHAEYEESLSGKNMYPQQSFGPNPFLGPVPIAPPFFPHVWYGYPFQGFVENPVMRQNIVLPPDDKGELDLPLENLDLSKECDSVSAVDEFPDARVEGAHSLSAASVSSKHEGRVEQSSQTRKADIDLASGSSAVEGKGHPPTQILNREREPGSAEPEPKRTIQSLKEKPEKVKDPKTAADVVSPGANSVDRLQRPKEESSEDENEVSNILRSGRSKQFYNQTYGSRKYKSDWGSSGRGGYQHVRGEESWKGQPNRSRDEGYQYHRHVRGRPYRGDRRRSGMGDGHRGQHT.

Position 1 is an N-acetylmethionine (methionine 1). In terms of domain architecture, OTU spans 34–155; the sequence is LYRKLVAKDG…GNHYDIVYPI (122 aa). The segment at 39 to 45 is cys-loop; it reads VAKDGSC. Residue aspartate 42 is part of the active site. Cysteine 45 functions as the Nucleophile in the catalytic mechanism. A variable-loop region spans residues 94–104; sequence LENPQEWVGQV. At tyrosine 120 the chain carries Phosphotyrosine. Residues serine 126 and serine 128 each carry the phosphoserine modification. Threonine 131 carries the post-translational modification Phosphothreonine. The tract at residues 143-148 is his-loop; sequence FSNGNH. Residue histidine 148 is part of the active site. Phosphoserine is present on residues serine 166, serine 199, serine 202, and serine 204. Residues 195–206 are compositionally biased toward acidic residues; that stretch reads EESNSEISDSED. Disordered regions lie at residues 195 to 239 and 322 to 431; these read EESN…SADL and KHTP…DFDH. Over residues 226-236 the composition is skewed to polar residues; sequence GSENPKNNGNS. Serine 340 bears the Phosphoserine mark. A compositionally biased stretch (low complexity) spans 392–403; sequence SSHSTGSQSQKS. Positions 419–431 are enriched in basic and acidic residues; it reads RKPDRERAEDFDH. Tyrosine 438 carries the post-translational modification Phosphotyrosine. Phosphoserine is present on serine 442. Tyrosine 459 bears the Phosphotyrosine mark. The interval 470 to 568 is disordered; that stretch reads PALSSSSVSQ…KPAEHIPLSN (99 aa). Residues 473 to 486 are compositionally biased toward low complexity; that stretch reads SSSSVSQSPSQNSN. Basic and acidic residues predominate over residues 495–528; it reads HARDRKGSMRRADAEERKDKDSLRGHTHVDKKPE. 2 positions are modified to phosphoserine: serine 544 and serine 895. The tract at residues 918 to 1107 is disordered; the sequence is LSAASVSSKH…MGDGHRGQHT (190 aa). Basic and acidic residues predominate over residues 963–994; sequence NREREPGSAEPEPKRTIQSLKEKPEKVKDPKT. Serine 1000, serine 1005, serine 1016, and serine 1017 each carry phosphoserine. Over residues 1032–1041 the composition is skewed to polar residues; it reads SKQFYNQTYG. The residue at position 1042 (serine 1042) is a Phosphoserine. Basic and acidic residues-rich tracts occupy residues 1060-1079 and 1089-1107; these read VRGE…EGYQ and YRGD…GQHT.

In terms of assembly, interacts with MYD88; the interaction is direct. Interacts with ALKBH3; the interaction is direct. Interacts with USP7; the interaction is direct. Interacts with USP9X; the interaction is direct. Post-translationally, phosphorylation at Ser-202 and Ser-204 activates 'Lys-63'-specific deubiquitinase activity. Induced upon stimulation with IL1B.

It is found in the cytoplasm. It localises to the nucleus. The catalysed reaction is Thiol-dependent hydrolysis of ester, thioester, amide, peptide and isopeptide bonds formed by the C-terminal Gly of ubiquitin (a 76-residue protein attached to proteins as an intracellular targeting signal).. Its activity is regulated as follows. Phosphorylation on Ser-202 and Ser-204 induces 'Lys-63'-specific deubiquitinase activity. Functionally, deubiquitinase which hydrolyzes the isopeptide bond between the ubiquitin C-terminus and the lysine epsilon-amino group of the target protein. May negatively regulate inflammatory and pathogen recognition signaling in innate immune response. Upon phosphorylation at Ser-202 and Ser-204 residues, via IL-1 receptor and Toll-like receptor signaling pathway, specifically deubiquitinates 'Lys-63'-polyubiquitinated MYD88 adapter protein triggering down-regulation of NF-kappa-B-dependent transcription of inflammatory mediators. Independently of the catalytic activity, acts as a scaffold for alternative deubiquitinases to assemble specific deubiquitinase-substrate complexes. Associates with USP7 and USP9X deubiquitinases to stabilize alkylation repair enzyme ALKBH3, thereby promoting the repair of alkylated DNA lesions. The polypeptide is OTU domain-containing protein 4 (Mus musculus (Mouse)).